The sequence spans 852 residues: Zinc finger and SCAN domain-containing protein 29 (852 aa).

The SCAN box domain occupies 18-100 (RQRFRRFHYQ…TLVEDLEREP (83 aa)). 3 disordered regions span residues 96–182 (LERE…PKSG), 347–400 (ASHS…SAAP), and 502–557 (PNDG…RAPV). A Glycyl lysine isopeptide (Lys-Gly) (interchain with G-Cter in SUMO2) cross-link involves residue K112. S153 carries the phosphoserine modification. K180 is covalently cross-linked (Glycyl lysine isopeptide (Lys-Gly) (interchain with G-Cter in SUMO2)). Polar residues predominate over residues 508 to 517 (ETASCPVQGT). A compositionally biased stretch (acidic residues) spans 528–545 (EADEATEEDSDDDEEDTE). The residue at position 561 (S561) is a Phosphoserine. K576 is covalently cross-linked (Glycyl lysine isopeptide (Lys-Gly) (interchain with G-Cter in SUMO2)). The segment at 603–625 (QGKGNESDCRSGRQWAKTSGEKR) is disordered. K652 participates in a covalent cross-link: Glycyl lysine isopeptide (Lys-Gly) (interchain with G-Cter in SUMO2). 6 consecutive C2H2-type zinc fingers follow at residues 678 to 700 (YKCA…RRIH), 706 to 728 (YKCL…RRIH), 734 to 756 (YQCG…QRTH), 762 to 784 (YQCE…RRIH), 790 to 812 (HVCP…HRTH), and 818 to 840 (YGCH…GEIH).

It belongs to the krueppel C2H2-type zinc-finger protein family.

The protein resides in the nucleus. Functionally, may be involved in transcriptional regulation. This is Zinc finger and SCAN domain-containing protein 29 (ZSCAN29) from Homo sapiens (Human).